A 92-amino-acid chain; its full sequence is Small ribosomal subunit protein bS16 (92 aa).

It belongs to the bacterial ribosomal protein bS16 family.

The chain is Small ribosomal subunit protein bS16 from Desulforudis audaxviator (strain MP104C).